We begin with the raw amino-acid sequence, 103 residues long: DNA-directed RNA polymerase subunit omega (103 aa).

Belongs to the RNA polymerase subunit omega family. As to quaternary structure, the RNAP catalytic core consists of 2 alpha, 1 beta, 1 beta' and 1 omega subunit. When a sigma factor is associated with the core the holoenzyme is formed, which can initiate transcription.

The enzyme catalyses RNA(n) + a ribonucleoside 5'-triphosphate = RNA(n+1) + diphosphate. Promotes RNA polymerase assembly. Latches the N- and C-terminal regions of the beta' subunit thereby facilitating its interaction with the beta and alpha subunits. This Streptococcus agalactiae serotype III (strain NEM316) protein is DNA-directed RNA polymerase subunit omega.